Reading from the N-terminus, the 1331-residue chain is DNA-directed RNA polymerase subunit beta' (1331 aa).

Zn(2+) contacts are provided by Cys-220, Cys-293, Cys-300, and Cys-303. Disordered regions lie at residues 1236 to 1257 and 1294 to 1331; these read DFVDEGTSRSPNGYSNVVTNDN and ISGDELISDDTPIPSDVQGKAPVIDDDAMIDDNWMKDQ. Over residues 1243–1257 the composition is skewed to polar residues; sequence SRSPNGYSNVVTNDN.

This sequence belongs to the RNA polymerase beta' chain family. RpoC2 subfamily. As to quaternary structure, in cyanobacteria the RNAP catalytic core is composed of 2 alpha, 1 beta, 1 beta', 1 gamma and 1 omega subunit. When a sigma factor is associated with the core the holoenzyme is formed, which can initiate transcription. Zn(2+) is required as a cofactor.

The enzyme catalyses RNA(n) + a ribonucleoside 5'-triphosphate = RNA(n+1) + diphosphate. Its function is as follows. DNA-dependent RNA polymerase catalyzes the transcription of DNA into RNA using the four ribonucleoside triphosphates as substrates. The protein is DNA-directed RNA polymerase subunit beta' of Picosynechococcus sp. (strain ATCC 27264 / PCC 7002 / PR-6) (Agmenellum quadruplicatum).